The primary structure comprises 188 residues: Elongation factor P (188 aa).

This sequence belongs to the elongation factor P family.

The protein resides in the cytoplasm. It functions in the pathway protein biosynthesis; polypeptide chain elongation. In terms of biological role, involved in peptide bond synthesis. Stimulates efficient translation and peptide-bond synthesis on native or reconstituted 70S ribosomes in vitro. Probably functions indirectly by altering the affinity of the ribosome for aminoacyl-tRNA, thus increasing their reactivity as acceptors for peptidyl transferase. The polypeptide is Elongation factor P (Cereibacter sphaeroides (strain KD131 / KCTC 12085) (Rhodobacter sphaeroides)).